Reading from the N-terminus, the 81-residue chain is uncharacterized protein (81 aa).

Helical transmembrane passes span 4–24 (IFKM…FNYT) and 61–81 (NIYT…LHII).

The protein localises to the cell membrane. This is an uncharacterized protein from Bacillus subtilis (strain 168).